The sequence spans 89 residues: Large ribosomal subunit protein bL28 (89 aa).

The protein belongs to the bacterial ribosomal protein bL28 family.

The sequence is that of Large ribosomal subunit protein bL28 from Chlamydia muridarum (strain MoPn / Nigg).